The following is a 300-amino-acid chain: Diaminopimelate epimerase (300 aa).

Substrate-binding residues include Asn-15, Gln-47, and Asn-67. The active-site Proton donor is Cys-76. Substrate-binding positions include 77–78 (GN), Asn-163, Asn-197, and 215–216 (ER). Cys-224 functions as the Proton acceptor in the catalytic mechanism. 225–226 (GS) is a substrate binding site. A disordered region spans residues 275-300 (SGTFDPATGEWSRDAQNDKPTDRGAA). The segment covering 285-300 (WSRDAQNDKPTDRGAA) has biased composition (basic and acidic residues).

The protein belongs to the diaminopimelate epimerase family. In terms of assembly, homodimer.

The protein resides in the cytoplasm. The catalysed reaction is (2S,6S)-2,6-diaminopimelate = meso-2,6-diaminopimelate. Its pathway is amino-acid biosynthesis; L-lysine biosynthesis via DAP pathway; DL-2,6-diaminopimelate from LL-2,6-diaminopimelate: step 1/1. Catalyzes the stereoinversion of LL-2,6-diaminopimelate (L,L-DAP) to meso-diaminopimelate (meso-DAP), a precursor of L-lysine and an essential component of the bacterial peptidoglycan. This Brucella anthropi (strain ATCC 49188 / DSM 6882 / CCUG 24695 / JCM 21032 / LMG 3331 / NBRC 15819 / NCTC 12168 / Alc 37) (Ochrobactrum anthropi) protein is Diaminopimelate epimerase.